We begin with the raw amino-acid sequence, 148 residues long: Endoribonuclease YbeY (148 aa).

Zn(2+) contacts are provided by H105, H109, and D115.

This sequence belongs to the endoribonuclease YbeY family. Zn(2+) is required as a cofactor.

The protein localises to the cytoplasm. Single strand-specific metallo-endoribonuclease involved in late-stage 70S ribosome quality control and in maturation of the 3' terminus of the 16S rRNA. The polypeptide is Endoribonuclease YbeY (Chlorobium phaeovibrioides (strain DSM 265 / 1930) (Prosthecochloris vibrioformis (strain DSM 265))).